The chain runs to 382 residues: ATP phosphoribosyltransferase regulatory subunit (382 aa).

This sequence belongs to the class-II aminoacyl-tRNA synthetase family. HisZ subfamily. In terms of assembly, heteromultimer composed of HisG and HisZ subunits.

Its subcellular location is the cytoplasm. It participates in amino-acid biosynthesis; L-histidine biosynthesis; L-histidine from 5-phospho-alpha-D-ribose 1-diphosphate: step 1/9. Functionally, required for the first step of histidine biosynthesis. May allow the feedback regulation of ATP phosphoribosyltransferase activity by histidine. The chain is ATP phosphoribosyltransferase regulatory subunit from Burkholderia pseudomallei (strain K96243).